A 222-amino-acid polypeptide reads, in one-letter code: uncharacterized protein (222 aa).

Residues 1–27 (MSFTRRKFVLGMGTVIFFTGSASSLLA) constitute a signal peptide (tat-type signal). 4Fe-4S ferredoxin-type domains lie at 37-66 (YAMIHDESRCNGCNICARACRKTNHAPAQG), 83-114 (TQYHFFRQSCQHCEDAPCIDVCPTGASWRDEQ), and 115-144 (GIVRVEKSQCIGCSYCIGACPYQVRYLNPV). [4Fe-4S] cluster is bound by residues cysteine 46, cysteine 49, cysteine 52, cysteine 56, cysteine 92, cysteine 95, cysteine 100, cysteine 104, cysteine 124, cysteine 127, cysteine 130, cysteine 134, cysteine 151, cysteine 154, cysteine 167, and cysteine 171.

In terms of processing, predicted to be exported by the Tat system. The position of the signal peptide cleavage has not been experimentally proven.

This is an uncharacterized protein from Escherichia coli O157:H7.